Reading from the N-terminus, the 263-residue chain is Mannose-specific lectin 2 (263 aa).

A signal peptide spans 1 to 24; it reads MAKSLVLSSLLLALLLAAPLASLA. Bulb-type lectin domains lie at 26 to 136 and 150 to 260; these read NNVL…APNR and RNVL…SSAS. 2 cysteine pairs are disulfide-bonded: Cys54-Cys76 and Cys178-Cys203.

In terms of assembly, heterotetramer of 2 domain 1 and 2 domain 2 chains arranged as a dimer of domain 1/domain 2 heterodimers.

Functionally, mannose-specific lectin. Has weak agglutinating activity towards trypsin-treated erythrocytes from rabbit but not from human. In Crocus vernus (Dutch crocus), this protein is Mannose-specific lectin 2.